The following is a 251-amino-acid chain: Imidazole glycerol phosphate synthase subunit HisF (251 aa).

Catalysis depends on residues D12 and D131.

This sequence belongs to the HisA/HisF family. Heterodimer of HisH and HisF.

Its subcellular location is the cytoplasm. The catalysed reaction is 5-[(5-phospho-1-deoxy-D-ribulos-1-ylimino)methylamino]-1-(5-phospho-beta-D-ribosyl)imidazole-4-carboxamide + L-glutamine = D-erythro-1-(imidazol-4-yl)glycerol 3-phosphate + 5-amino-1-(5-phospho-beta-D-ribosyl)imidazole-4-carboxamide + L-glutamate + H(+). It functions in the pathway amino-acid biosynthesis; L-histidine biosynthesis; L-histidine from 5-phospho-alpha-D-ribose 1-diphosphate: step 5/9. Its function is as follows. IGPS catalyzes the conversion of PRFAR and glutamine to IGP, AICAR and glutamate. The HisF subunit catalyzes the cyclization activity that produces IGP and AICAR from PRFAR using the ammonia provided by the HisH subunit. The protein is Imidazole glycerol phosphate synthase subunit HisF of Streptomyces avermitilis (strain ATCC 31267 / DSM 46492 / JCM 5070 / NBRC 14893 / NCIMB 12804 / NRRL 8165 / MA-4680).